Reading from the N-terminus, the 222-residue chain is Charged multivesicular body protein 3 (222 aa).

A lipid anchor (N-myristoyl glycine) is attached at glycine 2. An intramolecular interaction with C-terminus region spans residues 2 to 113; it reads GLFGKTQEKP…LQKSTEVMKA (112 aa). Residues 22-54 adopt a coiled-coil conformation; sequence KIRKEMRVVDRQIRDIQREEEKVKRSVKDAAKK. 2 important for autoinhibitory function regions span residues 59–64 and 168–169; these read VCVVLA and IL. The stretch at 149–222 forms a coiled coil; it reads ESMDDQEEME…MQSRLATLRS (74 aa). The segment at 151–220 is intramolecular interaction with N-terminus; sequence MDDQEEMEEA…EAMQSRLATL (70 aa). Positions 151–222 are interaction with VPS4A; sequence MDDQEEMEEA…MQSRLATLRS (72 aa). Residue lysine 179 forms a Glycyl lysine isopeptide (Lys-Gly) (interchain with G-Cter in ubiquitin) linkage. The disordered stretch occupies residues 180–222; sequence APSKVTDALPEPEPSGAMAASDEEEEEEEALEAMQSRLATLRS. 3 interaction with STAMBP regions span residues 196–222, 203–207, and 221–222; these read AMAA…TLRS, EEEEE, and RS. Serine 200 bears the Phosphoserine mark. The segment covering 200–210 has biased composition (acidic residues); it reads SDEEEEEEEAL. Positions 201 to 211 match the MIT-interacting motif motif; that stretch reads DEEEEEEEALE.

It belongs to the SNF7 family. As to quaternary structure, probable core component of the endosomal sorting required for transport complex III (ESCRT-III). ESCRT-III components are thought to multimerize to form a flat lattice on the perimeter membrane of the endosome. Several assembly forms of ESCRT-III may exist that interact and act sequentially. Forms a metastable monomer in solution; its core structure (without part of the putative autoinhibitory C-terminal acidic region) oligomerizes into a flat lattice via two different dimerization interfaces. In vitro, heteromerizes with CHMP2A (but not CHMP4) to form helical tubular structures that expose membrane-interacting sites on the outside whereas VPS4B can associate on the inside of the tubule. May interact with IGFBP7; the relevance of such interaction however remains unclear. Interacts with CHMP2A. Interacts with CHMP4A; the interaction requires the release of CHMP4A autoinhibition. Interacts with VPS4A. Interacts with STAMBP; the interaction appears to relieve the autoinhibition of CHMP3. Interacts with VTA1.

It localises to the cytoplasm. The protein resides in the cytosol. Its subcellular location is the membrane. It is found in the endosome. The protein localises to the late endosome membrane. In terms of biological role, probable core component of the endosomal sorting required for transport complex III (ESCRT-III) which is involved in multivesicular bodies (MVBs) formation and sorting of endosomal cargo proteins into MVBs. MVBs contain intraluminal vesicles (ILVs) that are generated by invagination and scission from the limiting membrane of the endosome and mostly are delivered to lysosomes enabling degradation of membrane proteins, such as stimulated growth factor receptors, lysosomal enzymes and lipids. The MVB pathway appears to require the sequential function of ESCRT-O, -I,-II and -III complexes. ESCRT-III proteins mostly dissociate from the invaginating membrane before the ILV is released. The ESCRT machinery also functions in topologically equivalent membrane fission events, such as the terminal stages of cytokinesis and the budding of enveloped viruses (lentiviruses). ESCRT-III proteins are believed to mediate the necessary vesicle extrusion and/or membrane fission activities, possibly in conjunction with the AAA ATPase VPS4. Selectively binds to phosphatidylinositol 3,5-bisphosphate PtdIns(3,5)P2 and PtdIns(3,4)P2 in preference to other phosphoinositides tested. Involved in late stages of cytokinesis. Plays a role in endosomal sorting/trafficking of EGF receptor. This chain is Charged multivesicular body protein 3 (CHMP3), found in Macaca fascicularis (Crab-eating macaque).